The chain runs to 85 residues: Conotoxin MaIr94 (85 aa).

The N-terminal stretch at 1–22 (MKLTCVLIITVLFLTACQLTAA) is a signal peptide. Residues 23-49 (GNSRDKQEDPVVRSSGEVQRSEDIKLA) constitute a propeptide that is removed on maturation. 3 cysteine pairs are disulfide-bonded: Cys-52/Cys-69, Cys-59/Cys-73, and Cys-68/Cys-84.

The protein belongs to the conotoxin O1 superfamily. In terms of tissue distribution, expressed by the venom duct.

Its subcellular location is the secreted. Functionally, produces no obvious effect on ionic currents when tested on the mouse dorsal rooted ganglia (DRG). This chain is Conotoxin MaIr94, found in Conus marmoreus (Marble cone).